Consider the following 449-residue polypeptide: UDP-N-acetylmuramate--L-alanine ligase (449 aa).

110–116 (GTHGKTT) lines the ATP pocket.

This sequence belongs to the MurCDEF family.

The protein resides in the cytoplasm. The enzyme catalyses UDP-N-acetyl-alpha-D-muramate + L-alanine + ATP = UDP-N-acetyl-alpha-D-muramoyl-L-alanine + ADP + phosphate + H(+). The protein operates within cell wall biogenesis; peptidoglycan biosynthesis. Functionally, cell wall formation. The polypeptide is UDP-N-acetylmuramate--L-alanine ligase (Desulfitobacterium hafniense (strain Y51)).